The sequence spans 170 residues: Large ribosomal subunit protein uL5 (170 aa).

This sequence belongs to the universal ribosomal protein uL5 family. As to quaternary structure, component of the large ribosomal subunit.

The protein resides in the nucleus. Its subcellular location is the cytoplasm. Component of the ribosome, a large ribonucleoprotein complex responsible for the synthesis of proteins in the cell. The small ribosomal subunit (SSU) binds messenger RNAs (mRNAs) and translates the encoded message by selecting cognate aminoacyl-transfer RNA (tRNA) molecules. The large subunit (LSU) contains the ribosomal catalytic site termed the peptidyl transferase center (PTC), which catalyzes the formation of peptide bonds, thereby polymerizing the amino acids delivered by tRNAs into a polypeptide chain. The nascent polypeptides leave the ribosome through a tunnel in the LSU and interact with protein factors that function in enzymatic processing, targeting, and the membrane insertion of nascent chains at the exit of the ribosomal tunnel. The polypeptide is Large ribosomal subunit protein uL5 (RPL11) (Chlamydomonas reinhardtii (Chlamydomonas smithii)).